A 546-amino-acid chain; its full sequence is (-)-5-epieremophilene synthase STPS2 (546 aa).

Positions 299, 303, 442, 446, and 450 each coordinate Mg(2+). The DDXXD motif signature appears at 299–303; sequence DDTYD.

The protein belongs to the terpene synthase family. Tpsa subfamily. As to quaternary structure, monomer. Mg(2+) serves as cofactor. Highly expressed in leaves. Expressed at levels in flowers.

It carries out the reaction (2E,6E)-farnesyl diphosphate = (-)-5-epi-eremophilene + diphosphate. The protein operates within secondary metabolite biosynthesis; terpenoid biosynthesis. In terms of biological role, sesquiterpene synthase that catalyzes the conversion of farnesyl diphosphate to (-)-5-epi-eremophilene. The sequence is that of (-)-5-epieremophilene synthase STPS2 from Salvia miltiorrhiza (Chinese sage).